Here is a 233-residue protein sequence, read N- to C-terminus: 5'-methylthioadenosine/S-adenosylhomocysteine nucleosidase (233 aa).

E12 serves as the catalytic Proton acceptor. Substrate-binding positions include G78, I152, and 173–174 (ME). D197 acts as the Proton donor in catalysis.

The protein belongs to the PNP/UDP phosphorylase family. MtnN subfamily. As to quaternary structure, homodimer.

The catalysed reaction is S-adenosyl-L-homocysteine + H2O = S-(5-deoxy-D-ribos-5-yl)-L-homocysteine + adenine. It carries out the reaction S-methyl-5'-thioadenosine + H2O = 5-(methylsulfanyl)-D-ribose + adenine. It catalyses the reaction 5'-deoxyadenosine + H2O = 5-deoxy-D-ribose + adenine. It participates in amino-acid biosynthesis; L-methionine biosynthesis via salvage pathway; S-methyl-5-thio-alpha-D-ribose 1-phosphate from S-methyl-5'-thioadenosine (hydrolase route): step 1/2. Its function is as follows. Catalyzes the irreversible cleavage of the glycosidic bond in both 5'-methylthioadenosine (MTA) and S-adenosylhomocysteine (SAH/AdoHcy) to adenine and the corresponding thioribose, 5'-methylthioribose and S-ribosylhomocysteine, respectively. Also cleaves 5'-deoxyadenosine, a toxic by-product of radical S-adenosylmethionine (SAM) enzymes, into 5-deoxyribose and adenine. Thus, is required for in vivo function of the radical SAM enzymes biotin synthase and lipoic acid synthase, that are inhibited by 5'-deoxyadenosine accumulation. This chain is 5'-methylthioadenosine/S-adenosylhomocysteine nucleosidase, found in Yersinia pestis bv. Antiqua (strain Angola).